The chain runs to 214 residues: MANEKLDGINPTRNELLNLKDRAKLSIKGHSLLKEKRDALIKEFFEILDRVQGSRDEVEKKLAIAYSELNKAQIDMGDMAVKRAALSVRESIELDISSRSIMGVSVPVVKSRATHNDVLSRGYGFAGTSANLDVAAKEFEESIKIIIELGEIEKTIIMLAREVEATKRRVNALEHVIIPRIKNTISFIEMRLEEMERESFAQLKVIKKNIDERE.

The protein belongs to the V-ATPase D subunit family. In terms of assembly, has multiple subunits with at least A(3), B(3), C, D, E, F, H, I and proteolipid K(x).

The protein resides in the cell membrane. In terms of biological role, component of the A-type ATP synthase that produces ATP from ADP in the presence of a proton gradient across the membrane. The protein is A-type ATP synthase subunit D of Methanosphaera stadtmanae (strain ATCC 43021 / DSM 3091 / JCM 11832 / MCB-3).